A 393-amino-acid chain; its full sequence is NAD(P)H-quinone oxidoreductase subunit H, chloroplastic (393 aa).

The protein belongs to the complex I 49 kDa subunit family. NDH is composed of at least 16 different subunits, 5 of which are encoded in the nucleus.

The protein localises to the plastid. It localises to the chloroplast thylakoid membrane. The catalysed reaction is a plastoquinone + NADH + (n+1) H(+)(in) = a plastoquinol + NAD(+) + n H(+)(out). The enzyme catalyses a plastoquinone + NADPH + (n+1) H(+)(in) = a plastoquinol + NADP(+) + n H(+)(out). Its function is as follows. NDH shuttles electrons from NAD(P)H:plastoquinone, via FMN and iron-sulfur (Fe-S) centers, to quinones in the photosynthetic chain and possibly in a chloroplast respiratory chain. The immediate electron acceptor for the enzyme in this species is believed to be plastoquinone. Couples the redox reaction to proton translocation, and thus conserves the redox energy in a proton gradient. This is NAD(P)H-quinone oxidoreductase subunit H, chloroplastic from Oenothera biennis (German evening primrose).